Consider the following 670-residue polypeptide: DNA ligase (670 aa).

Residues 32–36 (DSEYD), 81–82 (SL), and Glu-114 each bind NAD(+). Catalysis depends on Lys-116, which acts as the N6-AMP-lysine intermediate. Residues Arg-137, Glu-174, Lys-291, and Lys-315 each contribute to the NAD(+) site. Zn(2+) contacts are provided by Cys-409, Cys-412, Cys-427, and Cys-433. Residues 592 to 670 (ASENLFKDKT…EEEFLAQITR (79 aa)) enclose the BRCT domain.

This sequence belongs to the NAD-dependent DNA ligase family. LigA subfamily. Mg(2+) serves as cofactor. Requires Mn(2+) as cofactor.

It catalyses the reaction NAD(+) + (deoxyribonucleotide)n-3'-hydroxyl + 5'-phospho-(deoxyribonucleotide)m = (deoxyribonucleotide)n+m + AMP + beta-nicotinamide D-nucleotide.. Functionally, DNA ligase that catalyzes the formation of phosphodiester linkages between 5'-phosphoryl and 3'-hydroxyl groups in double-stranded DNA using NAD as a coenzyme and as the energy source for the reaction. It is essential for DNA replication and repair of damaged DNA. This Haemophilus influenzae (strain ATCC 51907 / DSM 11121 / KW20 / Rd) protein is DNA ligase.